A 488-amino-acid polypeptide reads, in one-letter code: MGQLFSFFEEVPNIIHEAINIALIAVSLIAALKGMINLWKSGLFQLIFFLTLAGRSCSFRIGRSTELQNITFDMLKVFEDHPTSCMVNHSTYYVHENKNATWCLEVSVTDVTLLMAEHDRQVLNNLSNCVHPAVEHRSRMVGLLEWIFRALKYDFNHDPTPLCQKQTSTVNETRVQINITEGFGSHGFEDTILQRLGVLFGSRIAFSNIQDLGKKRFLLIRNSTWKNQCEMNHVNSMHLMLANAGRSSGSRRPLGIFSWTITDAVGNDMPGGYCLERWMLVTSDLKCFGNTALAKCNLDHDSEFCDMLKLFEFNKKAIETLNDNTKNKVNLLTHSINALISDNLLMKNRLKELLNTPYCNYTKFWYVNHTASGEHSLPRCWLVRNNSYLNESEFRNDWIIESDHLLSEMLNKEYIDRQGKTPLTLVDICFWSTLFFTTTLFLHLVGFPTHRHIRGEPCPLPHRLNSRGGCRCGKYPELKKPITWHKNH.

Gly2 is lipidated: N-myristoyl glycine; by host. Residues 2–17 (GQLFSFFEEVPNIIHE) are Extracellular-facing. A helical transmembrane segment spans residues 18–32 (AINIALIAVSLIAAL). A topological domain (cytoplasmic) is located at residue Lys33. Residues 34–53 (GMINLWKSGLFQLIFFLTLA) form a helical membrane-spanning segment. Extracellular segments follow at residues 54–58 (GRSCS) and 59–427 (FRIG…TLVD). Cys57 contacts Zn(2+). N-linked (GlcNAc...) asparagine; by host glycans are attached at residues Asn69, Asn88, Asn99, Asn125, Asn171, Asn178, and Asn222. 4 cysteine pairs are disulfide-bonded: Cys85–Cys229, Cys274–Cys287, Cys296–Cys305, and Cys359–Cys380. 4 N-linked (GlcNAc...) asparagine; by host glycosylation sites follow: Asn360, Asn368, Asn385, and Asn390. The helical transmembrane segment at 428–448 (ICFWSTLFFTTTLFLHLVGFP) threads the bilayer. Residues 449-488 (THRHIRGEPCPLPHRLNSRGGCRCGKYPELKKPITWHKNH) lie on the Cytoplasmic side of the membrane. Residues His450, His452, Cys458, His462, Cys470, Cys472, and His488 each contribute to the Zn(2+) site.

It belongs to the arenaviridae GPC protein family. As to quaternary structure, homotetramer; disulfide-linked. Homotetramer. GP2 homotetramers bind through ionic interactions with GP1 homotetramers to form the GP complex together with the stable signal peptide. The GP-C polyprotein interacts with the host protease MBTPS1/SKI-1 resulting in the polyprotein processing. Specific enzymatic cleavages in vivo yield mature proteins. GP-C polyprotein is cleaved in the endoplasmic reticulum by the host protease MBTPS1. Only cleaved glycoprotein is incorporated into virions. In terms of processing, the SSP remains stably associated with the GP complex following cleavage by signal peptidase and plays crucial roles in the trafficking of GP through the secretory pathway. Post-translationally, myristoylation is necessary for GP2-mediated fusion activity.

The protein localises to the virion membrane. Its subcellular location is the host endoplasmic reticulum membrane. The protein resides in the host Golgi apparatus membrane. It is found in the host cell membrane. In terms of biological role, interacts with the host receptor. Mediates virus attachment to host TFRC. This attachment induces virion internalization predominantly through clathrin-mediated endocytosis. Functionally, class I viral fusion protein that directs fusion of viral and host endosomal membranes, leading to delivery of the nucleocapsid into the cytoplasm. Membrane fusion is mediated by irreversible conformational changes induced upon acidification in the endosome. Stable signal peptide (SSP): cleaved and functions as a signal peptide. In addition, it is also retained as the third component of the GP complex. The SSP is required for efficient glycoprotein expression, post-translational maturation cleavage of GP1 and GP2, glycoprotein transport to the cell surface plasma membrane, formation of infectious virus particles, and acid pH-dependent glycoprotein-mediated cell fusion. The protein is Pre-glycoprotein polyprotein GP complex of Homo sapiens (Human).